The primary structure comprises 108 residues: Ig kappa chain V-V region HP 123E6 (108 aa).

A framework-1 region spans residues 1-23 (DIQMTQSTSSLSASLGDRVTISC). An intrachain disulfide couples Cys23 to Cys88. Residues 24-34 (RASQDISNYLN) form a complementarity-determining-1 region. The framework-2 stretch occupies residues 35-49 (WYQQKPDGTVKLLIY). The interval 50–56 (YTSRLHS) is complementarity-determining-2. Residues 57–88 (GVPSRFSGSGSGTDYSLTISNLEQEDIATYFC) form a framework-3 region. The tract at residues 89-97 (QQGYMLPRT) is complementarity-determining-3. Residues 98 to 108 (FGGGTKLEIKR) form a framework-4 region.

This chain is Ig kappa chain V-V region HP 123E6, found in Mus musculus (Mouse).